A 1110-amino-acid chain; its full sequence is Retinal guanylyl cyclase 1 (1110 aa).

The first 56 residues, 1–56, serve as a signal peptide directing secretion; that stretch reads MTACTFLAGGLRDPGLCGPTRWAPSPPGLPPIPPRPRLRLRPPLLLLLLLPRSVLS. At 57 to 467 the chain is on the extracellular side; it reads AVFTVGVLGP…PDTICNGGVE (411 aa). Asn-302 carries N-linked (GlcNAc...) asparagine glycosylation. Residues 468-492 traverse the membrane as a helical segment; that stretch reads PSVVFIGFLLVVGMGLAGAFLAHYC. Positions 493–813 constitute a Protein kinase domain; that stretch reads RHRLLHIQMV…DRTFELFKSI (321 aa). The Cytoplasmic portion of the chain corresponds to 493 to 1110; it reads RHRLLHIQMV…KARPGQFSGK (618 aa). Residues 885-1015 enclose the Guanylate cyclase domain; that stretch reads TLYFSDIVGF…DTVNTASAME (131 aa). The disordered stretch occupies residues 1070 to 1110; that stretch reads PIPKPPDLQPGASNHGISLHEIPPDRRQKLEKARPGQFSGK. Residues 1091–1103 are compositionally biased toward basic and acidic residues; it reads IPPDRRQKLEKAR.

The protein belongs to the adenylyl cyclase class-4/guanylyl cyclase family. As to quaternary structure, homodimer; requires homodimerization for guanylyl cyclase activity. Interacts (via C-terminus) with RD3 (via C-terminus); promotes the exit of GUCY2D from the endoplasmic reticulum and its trafficking to the photoreceptor outer segments. Interaction with RD3 negatively regulates GUCY2D guanylate cyclase activity. As to expression, expressed in the retina in rod outer segment.

Its subcellular location is the photoreceptor outer segment membrane. The protein localises to the endoplasmic reticulum membrane. It catalyses the reaction GTP = 3',5'-cyclic GMP + diphosphate. With respect to regulation, activated by GUCA1A when free calcium ions concentration is low, and inhibited by GUCA1A when free calcium ions concentration is high. Negatively regulated by RD3; inhibits the basal and GUCA1A-stimulated guanylate cyclase activity. In terms of biological role, catalyzes the synthesis of cyclic GMP (cGMP) in rods and cones of photoreceptors. Plays an essential role in phototransduction, by mediating cGMP replenishment. May also participate in the trafficking of membrane-asociated proteins to the photoreceptor outer segment membrane. The chain is Retinal guanylyl cyclase 1 (GUCY2D) from Bos taurus (Bovine).